The following is a 336-amino-acid chain: Alpha-glucoside transport system permease protein AglF (336 aa).

8 consecutive transmembrane segments (helical) span residues 4–24 (LIAAILTMVAGVLVCAAYFWS), 55–75 (PWLFLAPALLALTLYLVYPVV), 113–133 (FLWLLVVPALSTFFGLIIAAL), 146–166 (LIFMPMAISFVGAAVIWKFIY), 176–196 (IGLLNAIVVALGGEPQAWITL), 202–222 (FFLMVILIWIQTGFAMVILSA), 258–278 (IAVVWTTITILVLKVFDIVLA), and 304–324 (FGRGAAIAVVIMILVVPIMIW). The 217-residue stretch at 109–325 (IFNNFLWLLV…ILVVPIMIWN (217 aa)) folds into the ABC transmembrane type-1 domain.

It belongs to the binding-protein-dependent transport system permease family. MalFG subfamily.

It is found in the cell inner membrane. Its function is as follows. Part of the binding-protein-dependent transport system for alpha-glucosides such as sucrose, maltose and trehalose. Probably responsible for the translocation of the substrate across the membrane. In Rhizobium meliloti (strain 1021) (Ensifer meliloti), this protein is Alpha-glucoside transport system permease protein AglF (aglF).